Consider the following 173-residue polypeptide: Calcineurin subunit B (173 aa).

4 consecutive EF-hand domains span residues 20–55 (DEID…AANP), 59–87 (RLMD…FSTK), 89–124 (NKKE…MVGN), and 130–165 (QLQQ…TNVY). Ca(2+) is bound by residues Asp-33, Asp-35, Ser-37, Glu-44, Asp-65, Asn-67, Ser-69, Asp-71, Glu-76, Asp-102, Asp-104, Asp-106, Tyr-108, Glu-113, Asp-143, Asp-145, Asp-147, Lys-149, and Glu-154.

It belongs to the calcineurin regulatory subunit family. Composed of a catalytic subunit (A) and a regulatory subunit (B).

Its function is as follows. Regulatory subunit of calcineurin, a calcium-dependent, calmodulin stimulated protein phosphatase. Confers calcium sensitivity. The polypeptide is Calcineurin subunit B (CNB1) (Yarrowia lipolytica (strain CLIB 122 / E 150) (Yeast)).